The primary structure comprises 613 residues: GPI mannosyltransferase 3 (613 aa).

N-linked (GlcNAc...) asparagine glycosylation is present at Asn19. Helical transmembrane passes span 22 to 42, 83 to 103, 106 to 126, 132 to 152, 168 to 188, 216 to 236, 252 to 272, 280 to 300, 309 to 329, 342 to 362, 369 to 389, and 411 to 431; these read FFLRDIIVIRLINAWWIATFF, LFAGVYLVADFISSHILPVGI, ATILVAVPQALQAVIAGLGDW, AVSIYGANSNVSFFALFLQIF, LEMTLTVMAMYYWPWELLGVA, LAVVLRPTNILIWATIVLFTI, VVTLIREAIWCGSLILAISAA, FWTFPAYNFLYFNLSKSLAVF, YFLQGLPLICTTSLPFAVASL, FNVLKTLAYTVFTTVGALSLI, FIYPLLPALSILAAPYTASFF, and YLFVALGVNMFLAGYLSFFHQ.

This sequence belongs to the glycosyltransferase 22 family. PIGB subfamily.

Its subcellular location is the endoplasmic reticulum membrane. Its pathway is glycolipid biosynthesis; glycosylphosphatidylinositol-anchor biosynthesis. Mannosyltransferase involved in glycosylphosphatidylinositol-anchor biosynthesis. Transfers the third mannose to Man2-GlcN-acyl-PI during GPI precursor assembly. This is GPI mannosyltransferase 3 (GPI10) from Gibberella zeae (strain ATCC MYA-4620 / CBS 123657 / FGSC 9075 / NRRL 31084 / PH-1) (Wheat head blight fungus).